The chain runs to 286 residues: Inositol polyphosphate multikinase alpha (286 aa).

Residues 1–22 (MQLKVPEHQVAGHIAKDGKPGP) are disordered.

This sequence belongs to the inositol phosphokinase (IPK) family. In terms of processing, phosphorylated. As to expression, detected in leaves, stems, roots, siliques and flowers. Highly expressed in root tissues, anthers, the stigma, pollen grains and growing pollen tubes.

The protein localises to the nucleus. It localises to the cell membrane. It catalyses the reaction 1D-myo-inositol 1,4,5-trisphosphate + 2 ATP = 1D-myo-inositol 1,3,4,5,6-pentakisphosphate + 2 ADP + 2 H(+). The enzyme catalyses 1D-myo-inositol 1,3,4,6-tetrakisphosphate + ATP = 1D-myo-inositol 1,3,4,5,6-pentakisphosphate + ADP + H(+). Its function is as follows. Inositol phosphate kinase with a broad substrate specificity. Phosphorylates inositol 1,4,5-trisphosphate (Ins(1,4,5)P3), inositol 1,4,5,6-tetrakisphosphate (Ins(1,4,5,6)P4), inositol 1,3,4,5-tetrakisphosphate (Ins(1,3,4,5)P4), inositol 1,3,4,6-tetrakisphosphate (Ins(1,3,4,6)P4) and inositol 1,2,3,4,6-pentakisphosphate (Ins(1,2,3,4,6)P5) but not inositol 1,4-bisphosphate (Ins(1,4)P2), inositol 1,3,4-trisphosphate (Ins(1,3,4)P3), inositol 1,2,6-trisphosphate (Ins(1,2,6)P3), inositol 3,4,5,6-tetrakisphosphate (Ins(3,4,5,6)P4), inositol 1,3,4,5,6-pentakisphosphate (Ins(1,3,4,5,6)P5), inositol 1,2,4,5,6-pentakisphosphate (Ins(1,2,4,5,6)P5) or inositol hexakisphosphate (InsP6). Regulates pollen and root development probably through the regulation of InsP3-mediated calcium accumulation. This is Inositol polyphosphate multikinase alpha (IPK2a) from Arabidopsis thaliana (Mouse-ear cress).